Consider the following 551-residue polypeptide: Putative hydroxymethylpyrimidine/phosphomethylpyrimidine kinase 2 (551 aa).

Glu-76 contacts 4-amino-5-hydroxymethyl-2-methylpyrimidine.

This sequence in the N-terminal section; belongs to the ThiD family. In the C-terminal section; belongs to the thiaminase-2 family.

It is found in the cytoplasm. It catalyses the reaction 4-amino-5-hydroxymethyl-2-methylpyrimidine + ATP = 4-amino-2-methyl-5-(phosphooxymethyl)pyrimidine + ADP + H(+). The enzyme catalyses 4-amino-2-methyl-5-(phosphooxymethyl)pyrimidine + ATP = 4-amino-2-methyl-5-(diphosphooxymethyl)pyrimidine + ADP. Its pathway is cofactor biosynthesis; thiamine diphosphate biosynthesis; 4-amino-2-methyl-5-diphosphomethylpyrimidine from 5-amino-1-(5-phospho-D-ribosyl)imidazole: step 2/3. It participates in cofactor biosynthesis; thiamine diphosphate biosynthesis; 4-amino-2-methyl-5-diphosphomethylpyrimidine from 5-amino-1-(5-phospho-D-ribosyl)imidazole: step 3/3. In terms of biological role, catalyzes the phosphorylation of hydroxymethylpyrimidine phosphate (HMP-P) to HMP-PP, and of HMP to HMP-P. This Schizosaccharomyces pombe (strain 972 / ATCC 24843) (Fission yeast) protein is Putative hydroxymethylpyrimidine/phosphomethylpyrimidine kinase 2.